The sequence spans 441 residues: Homogentisate 1,2-dioxygenase (441 aa).

His287 serves as the catalytic Proton acceptor. His330 and Glu336 together coordinate Fe cation. Residues Tyr345 and His366 each coordinate homogentisate. His366 contributes to the Fe cation binding site.

It belongs to the homogentisate dioxygenase family. As to quaternary structure, hexamer; dimer of trimers. The cofactor is Fe cation.

The catalysed reaction is homogentisate + O2 = 4-maleylacetoacetate + H(+). The protein operates within amino-acid degradation; L-phenylalanine degradation; acetoacetate and fumarate from L-phenylalanine: step 4/6. Involved in the catabolism of homogentisate (2,5-dihydroxyphenylacetate or 2,5-OH-PhAc), a central intermediate in the degradation of phenylalanine and tyrosine. Catalyzes the oxidative ring cleavage of the aromatic ring of homogentisate to yield maleylacetoacetate. The sequence is that of Homogentisate 1,2-dioxygenase from Xanthomonas oryzae pv. oryzae (strain MAFF 311018).